Consider the following 84-residue polypeptide: MSDIIFLNGMRFYGYHGALHAENELGQIFIVDVTLKVDLTEAGKTDNVKDTVHYGEVFEDVKNIVEGPSCQLIEHLAERIAKRI.

Substrate is bound by residues E22, Y54, and 73–74; that span reads IE.

The protein belongs to the DHNA family.

The enzyme catalyses 7,8-dihydroneopterin = 6-hydroxymethyl-7,8-dihydropterin + glycolaldehyde. The catalysed reaction is 7,8-dihydroneopterin = 7,8-dihydromonapterin. It functions in the pathway cofactor biosynthesis; tetrahydrofolate biosynthesis; 2-amino-4-hydroxy-6-hydroxymethyl-7,8-dihydropteridine diphosphate from 7,8-dihydroneopterin triphosphate: step 3/4. Functionally, catalyzes the conversion of 7,8-dihydroneopterin to 6-hydroxymethyl-7,8-dihydropterin. Can also catalyze the epimerization of carbon 2' of dihydroneopterin to dihydromonapterin. This Staphylococcus haemolyticus protein is Dihydroneopterin aldolase (folB).